A 223-amino-acid polypeptide reads, in one-letter code: Neurotrophic factor BDNF precursor form (223 aa).

Positions 1–5 are cleaved as a signal peptide; it reads SCMKA. The propeptide occupies 6–114; that stretch reads APMKEVSIRG…AANMSMRVRR (109 aa). N-linked (GlcNAc...) asparagine glycosylation occurs at Asn-107. Cystine bridges form between Cys-127-Cys-194 and Cys-172-Cys-223.

This sequence belongs to the NGF-beta family.

The protein localises to the secreted. Functionally, promotes the survival of neuronal populations that are all located either in the central nervous system or directly connected to it. In Lichanura trivirgata (Rosy boa), this protein is Neurotrophic factor BDNF precursor form (BDNF).